The sequence spans 148 residues: Glyoxalase domain-containing protein 5 (148 aa).

The VOC domain maps to 25-145 (RLDHIVMTVK…DRNLLEVSSY (121 aa)).

The protein belongs to the glyoxalase I family.

The chain is Glyoxalase domain-containing protein 5 (Glod5) from Mus musculus (Mouse).